We begin with the raw amino-acid sequence, 114 residues long: MPNYKVVLEAAWIVKDAKSVDDAMSVAISEAGKRLNAAKMDFVEVEVGGTFCPFCGEPFDSVFVVAGTGIVGLLLEMKVFNAESKEHAERIARKGIGKALRDVPLKVVDITEAE.

The protein belongs to the UPF0212 family.

The protein is UPF0212 protein UNCMA_00570 of Methanocella arvoryzae (strain DSM 22066 / NBRC 105507 / MRE50).